Reading from the N-terminus, the 124-residue chain is Fluoride-specific ion channel FluC (124 aa).

4 helical membrane-spanning segments follow: residues 5 to 25 (ILAV…AGTW), 38 to 58 (TLAV…WFLL), 69 to 89 (GLIV…LDTL), and 97 to 117 (ALIA…ATWA). The Na(+) site is built by Gly-76 and Thr-79.

Belongs to the fluoride channel Fluc/FEX (TC 1.A.43) family.

Its subcellular location is the cell inner membrane. The enzyme catalyses fluoride(in) = fluoride(out). Na(+) is not transported, but it plays an essential structural role and its presence is essential for fluoride channel function. In terms of biological role, fluoride-specific ion channel. Important for reducing fluoride concentration in the cell, thus reducing its toxicity. This is Fluoride-specific ion channel FluC from Pseudomonas fluorescens (strain SBW25).